We begin with the raw amino-acid sequence, 508 residues long: WD repeat-containing protein DDB_G0290555 (508 aa).

WD repeat units lie at residues 32–74 (TSEL…LIGE), 159–198 (NVAT…KTYS), 252–292 (FSKH…QVGS), and 295–334 (DSAG…MLHK). The interval 368–508 (ENKNRINNDD…KKFAGLKKRK (141 aa)) is disordered. Residues 399-435 (MDSDDDIEDGDDNDVEFPMEADSDDSDFDLGNSDDDN) show a composition bias toward acidic residues. The span at 436 to 446 (ISVKKENKGDS) shows a compositional bias: basic and acidic residues. Residues 447–456 (DDSDDDSDED) show a composition bias toward acidic residues. The segment covering 471-493 (NNNNNNNKGKNNKGKNNSSTKKT) has biased composition (low complexity). Basic residues predominate over residues 497-508 (LKKKFAGLKKRK).

The polypeptide is WD repeat-containing protein DDB_G0290555 (Dictyostelium discoideum (Social amoeba)).